The following is a 112-amino-acid chain: Large ribosomal subunit protein bL20c (112 aa).

The protein belongs to the bacterial ribosomal protein bL20 family.

The protein localises to the plastid. It localises to the chloroplast. In terms of biological role, binds directly to 23S ribosomal RNA and is necessary for the in vitro assembly process of the 50S ribosomal subunit. It is not involved in the protein synthesizing functions of that subunit. This Anthoceros angustus (Hornwort) protein is Large ribosomal subunit protein bL20c (rpl20).